A 1462-amino-acid polypeptide reads, in one-letter code: DNA topoisomerase 2 (1462 aa).

Residues N79, N108, S136 to N138, and G149 to K156 contribute to the ATP site. The interval N332–K334 is interaction with DNA. Q365–K367 is a binding site for ATP. Positions C442–V556 constitute a Toprim domain. The Mg(2+) site is built by E448, D525, and D527. One can recognise a Topo IIA-type catalytic domain in the interval K671 to L1131. Y761 serves as the catalytic O-(5'-phospho-DNA)-tyrosine intermediate. An interaction with DNA region spans residues K947–N956. Disordered regions lie at residues P1040 to V1077 and E1147 to D1462. The span at N1056 to P1068 shows a compositional bias: acidic residues. The segment covering P1167–A1181 has biased composition (basic residues). Low complexity predominate over residues A1198–V1207. The span at I1240 to M1250 shows a compositional bias: polar residues. Basic residues predominate over residues A1260–S1275. Residues S1282–E1300 show a composition bias toward acidic residues. 2 stretches are compositionally biased toward low complexity: residues K1314–A1334 and A1419–A1430. Over residues S1442–D1462 the composition is skewed to acidic residues.

It belongs to the type II topoisomerase family. As to quaternary structure, homodimer. Mg(2+) is required as a cofactor. Requires Mn(2+) as cofactor. It depends on Ca(2+) as a cofactor. In terms of tissue distribution, abundant in proliferative tissues.

It carries out the reaction ATP-dependent breakage, passage and rejoining of double-stranded DNA.. Its function is as follows. Control of topological states of DNA by transient breakage and subsequent rejoining of DNA strands. Topoisomerase II makes double-strand breaks. This Pisum sativum (Garden pea) protein is DNA topoisomerase 2 (TOP2).